Here is a 152-residue protein sequence, read N- to C-terminus: Large-conductance mechanosensitive channel (152 aa).

Helical transmembrane passes span Val-14–Leu-34, Leu-39–Ile-59, and Gly-85–Ile-105.

It belongs to the MscL family. Homopentamer.

The protein resides in the cell inner membrane. In terms of biological role, channel that opens in response to stretch forces in the membrane lipid bilayer. May participate in the regulation of osmotic pressure changes within the cell. The polypeptide is Large-conductance mechanosensitive channel (Syntrophus aciditrophicus (strain SB)).